The sequence spans 396 residues: S-adenosylmethionine decarboxylase proenzyme (396 aa).

Catalysis depends on residues Glu-29 and Glu-32. The Schiff-base intermediate with substrate; via pyruvic acid role is filled by Ser-88. Ser-88 bears the Pyruvic acid (Ser); by autocatalysis mark. The Proton donor; for catalytic activity role is filled by Cys-102. Catalysis depends on proton acceptor; for processing activity residues Ser-287 and His-301.

It belongs to the eukaryotic AdoMetDC family. Pyruvate is required as a cofactor. Post-translationally, is synthesized initially as an inactive proenzyme. Formation of the active enzyme involves a self-maturation process in which the active site pyruvoyl group is generated from an internal serine residue via an autocatalytic post-translational modification. Two non-identical subunits are generated from the proenzyme in this reaction, and the pyruvate is formed at the N-terminus of the alpha chain, which is derived from the carboxyl end of the proenzyme. The post-translation cleavage follows an unusual pathway, termed non-hydrolytic serinolysis, in which the side chain hydroxyl group of the serine supplies its oxygen atom to form the C-terminus of the beta chain, while the remainder of the serine residue undergoes an oxidative deamination to produce ammonia and the pyruvoyl group blocking the N-terminus of the alpha chain.

It carries out the reaction S-adenosyl-L-methionine + H(+) = S-adenosyl 3-(methylsulfanyl)propylamine + CO2. Its pathway is amine and polyamine biosynthesis; S-adenosylmethioninamine biosynthesis; S-adenosylmethioninamine from S-adenosyl-L-methionine: step 1/1. In terms of biological role, catalyzes the decarboxylation of S-adenosylmethionine, a key step in the biosynthetic pathway for spermidine and spermine. It is essential for normal growth, sporulation, and maintenance of ds-RNA virus. This Saccharomyces cerevisiae (strain ATCC 204508 / S288c) (Baker's yeast) protein is S-adenosylmethionine decarboxylase proenzyme (SPE2).